The primary structure comprises 545 residues: Cannabidiolic acid synthase-like 1 (545 aa).

An N-terminal signal peptide occupies residues 1 to 28 (MKCSTFCFWYVCKIIFFFLSFNIQISIA). The cysteines at positions 37 and 99 are disulfide-linked. 4 N-linked (GlcNAc...) asparagine glycosylation sites follow: asparagine 45, asparagine 65, asparagine 89, and asparagine 168. The 175-residue stretch at 77 to 251 (TTPKPLVIIT…AAWKIRLVAV (175 aa)) folds into the FAD-binding PCMH-type domain. Positions 114 to 176 (HDAEGMSYIS…ENLSFPAGYC (63 aa)) form a cross-link, 6-(S-cysteinyl)-8alpha-(pros-histidyl)-FAD (His-Cys). Residue histidine 292 participates in substrate binding. Residues asparagine 297, asparagine 305, asparagine 329, and asparagine 361 are each glycosylated (N-linked (GlcNAc...) asparagine). Tyrosine 417 is a binding site for substrate. Asparagine 467 carries N-linked (GlcNAc...) asparagine glycosylation. Tyrosine 484 serves as the catalytic Proton acceptor. Asparagine 499 carries N-linked (GlcNAc...) asparagine glycosylation.

The protein belongs to the oxygen-dependent FAD-linked oxidoreductase family. The cofactor is FAD. The FAD cofactor is bound via a bicovalent 6-S-cysteinyl, 8alpha-N1-histidyl FAD linkage.

It is found in the secreted. Has no cannabidiolic acid synthase activity. This Cannabis sativa (Hemp) protein is Cannabidiolic acid synthase-like 1 (CBDAS2).